A 94-amino-acid chain; its full sequence is Histone-like DNA-binding protein (94 aa).

This sequence belongs to the bacterial histone-like protein family.

This is Histone-like DNA-binding protein from Rickettsia bellii (strain RML369-C).